A 157-amino-acid chain; its full sequence is Ribonuclease H (157 aa).

Residues 5–146 (IMKQVEIFTD…CDDLARTAAE (142 aa)) form the RNase H type-1 domain. 4 residues coordinate Mg(2+): Asp-14, Glu-52, Asp-74, and Asp-138.

It belongs to the RNase H family. In terms of assembly, monomer. The cofactor is Mg(2+).

It is found in the cytoplasm. The enzyme catalyses Endonucleolytic cleavage to 5'-phosphomonoester.. Its function is as follows. Endonuclease that specifically degrades the RNA of RNA-DNA hybrids. This is Ribonuclease H from Aliivibrio salmonicida (strain LFI1238) (Vibrio salmonicida (strain LFI1238)).